Here is a 477-residue protein sequence, read N- to C-terminus: PEP-dependent dihydroxyacetone kinase, phosphoryl donor subunit DhaM (477 aa).

In terms of domain architecture, PTS EIIA type-4 spans 1-135 (MIGLIIVSHS…QALQAKQQQL (135 aa)). H9 functions as the Tele-phosphohistidine intermediate in the catalytic mechanism. In terms of domain architecture, HPr spans 156 to 243 (ALTTQWVVKN…QLAQHNFGDN (88 aa)). H170 (pros-phosphohistidine intermediate) is an active-site residue. A PTS EI-like, N-terminal part region spans residues 269 to 477 (HAPNTELCIS…IETRSLIVAS (209 aa)). H435 functions as the Tele-phosphohistidine intermediate in the catalytic mechanism.

Belongs to the PEP-utilizing enzyme family. Homodimer. The dihydroxyacetone kinase complex is composed of a homodimer of DhaM, a homodimer of DhaK and the subunit DhaL.

The catalysed reaction is dihydroxyacetone + phosphoenolpyruvate = dihydroxyacetone phosphate + pyruvate. In terms of biological role, component of the dihydroxyacetone kinase complex, which is responsible for the phosphoenolpyruvate (PEP)-dependent phosphorylation of dihydroxyacetone. DhaM serves as the phosphoryl donor. Is phosphorylated by phosphoenolpyruvate in an EI- and HPr-dependent reaction, and a phosphorelay system on histidine residues finally leads to phosphoryl transfer to DhaL and dihydroxyacetone. This is PEP-dependent dihydroxyacetone kinase, phosphoryl donor subunit DhaM from Providencia stuartii (strain MRSN 2154).